Reading from the N-terminus, the 93-residue chain is Acylphosphatase (93 aa).

The Acylphosphatase-like domain maps to 7–93; sequence RLTAWVHGRV…ADAIAGFTER (87 aa). Active-site residues include R22 and N40.

It belongs to the acylphosphatase family.

It catalyses the reaction an acyl phosphate + H2O = a carboxylate + phosphate + H(+). This is Acylphosphatase (acyP) from Mycolicibacterium vanbaalenii (strain DSM 7251 / JCM 13017 / BCRC 16820 / KCTC 9966 / NRRL B-24157 / PYR-1) (Mycobacterium vanbaalenii).